The sequence spans 187 residues: Oligoribonuclease (187 aa).

The 164-residue stretch at 7–170 (LCWLDMEMTG…DDILESIEEM (164 aa)) folds into the Exonuclease domain. The active site involves tyrosine 128.

The protein belongs to the oligoribonuclease family.

The protein resides in the cytoplasm. Functionally, 3'-to-5' exoribonuclease specific for small oligoribonucleotides. This is Oligoribonuclease from Neisseria meningitidis serogroup C / serotype 2a (strain ATCC 700532 / DSM 15464 / FAM18).